The primary structure comprises 338 residues: Uroporphyrinogen decarboxylase (338 aa).

Residues arginine 25 to arginine 29, phenylalanine 44, aspartate 75, tyrosine 146, serine 201, and histidine 314 each bind substrate.

This sequence belongs to the uroporphyrinogen decarboxylase family. In terms of assembly, homodimer.

It localises to the cytoplasm. It catalyses the reaction uroporphyrinogen III + 4 H(+) = coproporphyrinogen III + 4 CO2. Its pathway is porphyrin-containing compound metabolism; protoporphyrin-IX biosynthesis; coproporphyrinogen-III from 5-aminolevulinate: step 4/4. In terms of biological role, catalyzes the decarboxylation of four acetate groups of uroporphyrinogen-III to yield coproporphyrinogen-III. The protein is Uroporphyrinogen decarboxylase of Aquifex aeolicus (strain VF5).